The chain runs to 63 residues: Overexpressed in colon carcinoma 1 protein homolog (63 aa).

The segment covering methionine 1–serine 10 has biased composition (polar residues). The interval methionine 1–glycine 39 is disordered.

Belongs to the OCC1 family.

This Mus musculus (Mouse) protein is Overexpressed in colon carcinoma 1 protein homolog.